The chain runs to 117 residues: Large ribosomal subunit protein uL18 (117 aa).

The protein belongs to the universal ribosomal protein uL18 family. As to quaternary structure, part of the 50S ribosomal subunit; part of the 5S rRNA/L5/L18/L25 subcomplex. Contacts the 5S and 23S rRNAs.

Its function is as follows. This is one of the proteins that bind and probably mediate the attachment of the 5S RNA into the large ribosomal subunit, where it forms part of the central protuberance. In Klebsiella pneumoniae subsp. pneumoniae (strain ATCC 700721 / MGH 78578), this protein is Large ribosomal subunit protein uL18.